The following is a 55-amino-acid chain: MAKPATILIKLLSTAGTGFFYVAKKNPRKTTEKLEFRKYDPVVRKHVQFKEAKIK.

The protein belongs to the bacterial ribosomal protein bL33 family.

In Paramagnetospirillum magneticum (strain ATCC 700264 / AMB-1) (Magnetospirillum magneticum), this protein is Large ribosomal subunit protein bL33.